The chain runs to 555 residues: Urocanate hydratase (555 aa).

NAD(+) is bound by residues 53–54, glutamine 131, 177–179, glutamate 197, arginine 202, 243–244, 264–268, 274–275, and tyrosine 323; these read GG, GMG, NA, QTSAH, and YL. Cysteine 411 is an active-site residue. Glycine 493 serves as a coordination point for NAD(+).

This sequence belongs to the urocanase family. NAD(+) is required as a cofactor.

It is found in the cytoplasm. It catalyses the reaction 4-imidazolone-5-propanoate = trans-urocanate + H2O. It functions in the pathway amino-acid degradation; L-histidine degradation into L-glutamate; N-formimidoyl-L-glutamate from L-histidine: step 2/3. Functionally, catalyzes the conversion of urocanate to 4-imidazolone-5-propionate. In Maricaulis maris (strain MCS10) (Caulobacter maris), this protein is Urocanate hydratase.